The chain runs to 338 residues: Stage V sporulation protein AD (338 aa).

This chain is Stage V sporulation protein AD (spoVAD), found in Bacillus subtilis (strain 168).